A 326-amino-acid chain; its full sequence is Vomeronasal type-1 receptor 94 (326 aa).

Residues 1–32 (MSEILLFSPQPLFSYTMNKYSRLYTNSNIRNT) lie on the Extracellular side of the membrane. A helical membrane pass occupies residues 33-53 (FFSEIGIGIAANSLLLLFHIF). At 54-65 (KFIRGQRSRLTD) the chain is on the cytoplasmic side. A helical membrane pass occupies residues 66 to 86 (LPIGLLSLIHLLKLLMIAFIA). At 87–110 (TDIFISWRGWDDIICKFLVYLYRS) the chain is on the extracellular side. A disulfide bridge connects residues Cys101 and Cys188. Residues 111-130 (FRGLSLCTTCMLSVLQAITL) form a helical membrane-spanning segment. At 131 to 150 (SPRSSCLAKFKHKSPHHVSC) the chain is on the cytoplasmic side. The helical transmembrane segment at 151-171 (AILSLSVLYMFISSHLLVSLI) threads the bilayer. Over 172–203 (ATPNLTTNVFMYVSESCSILPMSYLMQSMFST) the chain is Extracellular. N-linked (GlcNAc...) asparagine glycosylation occurs at Asn175. The chain crosses the membrane as a helical span at residues 204 to 224 (LLAIRDVFLISLMVLSTCYMV). Over 225-254 (ALLCRHRKQTRHLQGTSLSPKASPEKKATH) the chain is Cytoplasmic. A helical membrane pass occupies residues 255-275 (SILMLMSFFVLMSILDSIVSC). The Extracellular portion of the chain corresponds to 276–285 (SRTMFLYDPT). The helical transmembrane segment at 286–306 (SYAIQIFVSHIYATVSPFVFM) threads the bilayer. Residues 307-326 (SNEKHIVNFLRSLCKRVINV) are Cytoplasmic-facing.

This sequence belongs to the G-protein coupled receptor 1 family.

Its subcellular location is the cell membrane. Putative pheromone receptor implicated in the regulation of social as well as reproductive behavior. This is Vomeronasal type-1 receptor 94 (Vom1r94) from Rattus norvegicus (Rat).